The primary structure comprises 653 residues: Modification methylase StsI (653 aa).

The protein belongs to the N(4)/N(6)-methyltransferase family. In terms of assembly, monomer.

The catalysed reaction is a 2'-deoxyadenosine in DNA + S-adenosyl-L-methionine = an N(6)-methyl-2'-deoxyadenosine in DNA + S-adenosyl-L-homocysteine + H(+). In terms of biological role, an alpha subtype methylase that recognizes the double-stranded sequence 5'-GGATG-3' in one strand and 3'-CATCC-5' in the other, methylates A of both strands, and protects the DNA from cleavage by the StsI endonuclease. The 2 domains of the protein participate in modification of the two strands. This is Modification methylase StsI (stsIM) from Streptococcus sanguinis.